Reading from the N-terminus, the 560-residue chain is N-acetylglucosamine-6-sulfatase (560 aa).

The disordered stretch occupies residues 1–25; the sequence is MRLLSLAPDRPRRGGPRHLTSGSPA. The first 48 residues, 1-48, serve as a signal peptide directing secretion; that stretch reads MRLLSLAPDRPRRGGPRHLTSGSPALPPPPPLLLLLLLLGGCLGVSGA. Ca(2+)-binding residues include Asp-63, Asp-64, and Cys-99. Cys-99 acts as the Nucleophile in catalysis. Cys-99 carries the 3-oxoalanine (Cys) modification. 7 N-linked (GlcNAc...) asparagine glycosylation sites follow: Asn-119, Asn-125, Asn-191, Asn-206, Asn-218, Asn-287, and Asn-325. 2 residues coordinate Ca(2+): Asp-334 and Asn-335. N-linked (GlcNAc...) asparagine glycosylation is found at Asn-370, Asn-395, Asn-413, Asn-430, Asn-457, and Asn-488. A Phosphoserine modification is found at Ser-549.

Belongs to the sulfatase family. The cofactor is Ca(2+). In terms of processing, the conversion to 3-oxoalanine (also known as C-formylglycine, FGly), of a serine or cysteine residue in prokaryotes and of a cysteine residue in eukaryotes, is critical for catalytic activity.

It localises to the lysosome. It catalyses the reaction Hydrolysis of the 6-sulfate groups of the N-acetyl-D-glucosamine 6-sulfate units of heparan sulfate and keratan sulfate.. In terms of biological role, hydrolyzes 6-sulfate groups in N-acetyl-d-glucosaminide units of heparin sulfate and keratan sulfate. The sequence is that of N-acetylglucosamine-6-sulfatase (GNS) from Bos taurus (Bovine).